Consider the following 170-residue polypeptide: Cyclic pyranopterin monophosphate synthase (170 aa).

Residues 89-91 (LCH) and 125-126 (ME) each bind substrate. The active site involves aspartate 140.

It belongs to the MoaC family. In terms of assembly, homohexamer; trimer of dimers.

The catalysed reaction is (8S)-3',8-cyclo-7,8-dihydroguanosine 5'-triphosphate = cyclic pyranopterin phosphate + diphosphate. It participates in cofactor biosynthesis; molybdopterin biosynthesis. Catalyzes the conversion of (8S)-3',8-cyclo-7,8-dihydroguanosine 5'-triphosphate to cyclic pyranopterin monophosphate (cPMP). In Streptomyces avermitilis (strain ATCC 31267 / DSM 46492 / JCM 5070 / NBRC 14893 / NCIMB 12804 / NRRL 8165 / MA-4680), this protein is Cyclic pyranopterin monophosphate synthase.